The primary structure comprises 257 residues: Zinc transporter ZupT (257 aa).

Transmembrane regions (helical) follow at residues 5-25, 32-52, 61-81, 109-129, 137-157, 171-191, 195-215, and 236-256; these read LILT…GVLG, VLAF…LMEM, GMSP…YFGL, AILL…ATFV, LGFG…LAVA, IFWA…AWLI, LVSP…MVAL, and GVLC…TIGI. Positions 120 and 123 each coordinate Fe(2+). Residues Glu-123 and His-148 each contribute to the Zn(2+) site. Fe(2+) contacts are provided by Asn-149, Glu-152, and Glu-181. Glu-152 lines the Zn(2+) pocket.

Belongs to the ZIP transporter (TC 2.A.5) family. ZupT subfamily.

The protein resides in the cell inner membrane. It carries out the reaction Zn(2+)(in) = Zn(2+)(out). Mediates zinc uptake. May also transport other divalent cations. In Salmonella agona (strain SL483), this protein is Zinc transporter ZupT.